The chain runs to 97 residues: Large ribosomal subunit protein bL28 (97 aa).

This sequence belongs to the bacterial ribosomal protein bL28 family.

The protein is Large ribosomal subunit protein bL28 of Brucella ovis (strain ATCC 25840 / 63/290 / NCTC 10512).